The chain runs to 265 residues: Asparagine-rich protein (265 aa).

The signal sequence occupies residues 1–21; it reads MSRLTLLVLLVIAAVIQKVHG. Disordered stretches follow at residues 20-71 and 88-183; these read HGQG…NRNI and SNQN…NQQY. 2 stretches are compositionally biased toward basic and acidic residues: residues 22 to 35 and 44 to 55; these read QGRE…HEPG and EKTERNLREPNR. Residues 88-98 show a composition bias toward low complexity; it reads SNQNNFGNNRS. Over residues 115–124 the composition is skewed to basic and acidic residues; sequence NKSEVEKENG. Basic residues predominate over residues 152 to 166; sequence KVQHRIAKRFQKRHP.

Nacreous layer of shell (at protein level). Expressed primarily in the mantle with highest level in the mantle pallium and lower level in the mantle edge.

It localises to the secreted. In Pinctada maxima (Silver-lipped pearl oyster), this protein is Asparagine-rich protein.